A 523-amino-acid chain; its full sequence is Chitinase Chi52 (523 aa).

Residues 1-30 (MNQAVRFRPVITFALAFLLLITWFAPRADA) form the signal peptide. The disordered stretch occupies residues 80-101 (GSGGETPTPDTAPPSVPAGLTS). One can recognise a Fibronectin type-III domain in the interval 95–180 (VPAGLTSSSI…TSLSVTTSNG (86 aa)). A GH18 domain is found at 190 to 513 (KWLIGYWHNF…SAHRPFLNGL (324 aa)). The Proton donor role is filled by Glu-302.

The protein belongs to the glycosyl hydrolase 18 family. Chitinase class II subfamily.

The enzyme catalyses Random endo-hydrolysis of N-acetyl-beta-D-glucosaminide (1-&gt;4)-beta-linkages in chitin and chitodextrins.. Activity is inhibited by Cu(2+) and Co(2+), and almost completely inhibited by SDS. In terms of biological role, acidic chitinase that displays a broad substrate specificity, showing the highest specific activity toward colloidal chitin, followed by ethylene glycol chitin and ball milled chitin, but exhibits no activity toward powdery chitin and chitosan. Hydrolyzes colloidal chitin and chitooligosaccharides with degree of polymerization 2-5 to release mainly N-acetyl chitobiose. Displays inhibition effects on the growth of some phytopathogenic fungi, including Alternaria alstroemeriae, Botrytis cinerea, Rhizoctonia solani, Sclerotinia sclerotiorum and Valsa mali. The chain is Chitinase Chi52 from Paenibacillus xylanexedens.